The chain runs to 434 residues: Trigger factor (434 aa).

One can recognise a PPIase FKBP-type domain in the interval 160–245 (GDKAKINFVG…LNEVQAANLP (86 aa)).

This sequence belongs to the FKBP-type PPIase family. Tig subfamily.

It localises to the cytoplasm. It carries out the reaction [protein]-peptidylproline (omega=180) = [protein]-peptidylproline (omega=0). In terms of biological role, involved in protein export. Acts as a chaperone by maintaining the newly synthesized protein in an open conformation. Functions as a peptidyl-prolyl cis-trans isomerase. The chain is Trigger factor from Shewanella woodyi (strain ATCC 51908 / MS32).